The following is a 177-amino-acid chain: Peptide methionine sulfoxide reductase MsrA (177 aa).

Residue cysteine 15 is part of the active site.

The protein belongs to the MsrA Met sulfoxide reductase family.

The catalysed reaction is L-methionyl-[protein] + [thioredoxin]-disulfide + H2O = L-methionyl-(S)-S-oxide-[protein] + [thioredoxin]-dithiol. The enzyme catalyses [thioredoxin]-disulfide + L-methionine + H2O = L-methionine (S)-S-oxide + [thioredoxin]-dithiol. Functionally, has an important function as a repair enzyme for proteins that have been inactivated by oxidation. Catalyzes the reversible oxidation-reduction of methionine sulfoxide in proteins to methionine. This Listeria welshimeri serovar 6b (strain ATCC 35897 / DSM 20650 / CCUG 15529 / CIP 8149 / NCTC 11857 / SLCC 5334 / V8) protein is Peptide methionine sulfoxide reductase MsrA.